The primary structure comprises 107 residues: UPF0122 protein EAT1b_2891 (107 aa).

This sequence belongs to the UPF0122 family.

Functionally, might take part in the signal recognition particle (SRP) pathway. This is inferred from the conservation of its genetic proximity to ftsY/ffh. May be a regulatory protein. The sequence is that of UPF0122 protein EAT1b_2891 from Exiguobacterium sp. (strain ATCC BAA-1283 / AT1b).